The sequence spans 561 residues: Solute carrier family 41 member 2 (561 aa).

The Extracellular segment spans residues 1–150 (MTANTGEPYK…KESSIAMALQ (150 aa)). Residues 151–171 (ILVPFLLAGFGTVSAGMVLDI) traverse the membrane as a helical segment. The Cytoplasmic segment spans residues 172–183 (VQHWDVFKNLTE). The chain crosses the membrane as a helical span at residues 184–204 (VFILVPALLGLKGNLEMTLAS). Residues 205–233 (RLSTAVNVGKMDSPIEKWNLIIGNLALKQ) lie on the Extracellular side of the membrane. A helical transmembrane segment spans residues 234–254 (VQATVVGFLAAVFAVILGWIP). Over 255-270 (DGKYQLDHAILLCSSS) the chain is Cytoplasmic. The helical transmembrane segment at 271-291 (VATAFIASLLQGIIMVGVIVG) threads the bilayer. Residues 292 to 301 (SKKTGINPDN) are Extracellular-facing. Residues 302-322 (VATPIAASFGDLITLAILAWI) form a helical membrane-spanning segment. At 323–333 (SQGLYNCLGSY) the chain is on the cytoplasmic side. A helical membrane pass occupies residues 334–354 (AFVSPLVGVFFLAMTPIWIVI). The Extracellular segment spans residues 355-364 (ASKHPATRTV). A helical membrane pass occupies residues 365–385 (LHSGWEPVITAMLISSIGGLI). Residues 386–394 (LDTTVSDPN) are Cytoplasmic-facing. The helical transmembrane segment at 395 to 415 (LVGIVVYTPVINGIGGNLVAI) threads the bilayer. The Extracellular portion of the chain corresponds to 416 to 457 (QASRISTYLHLYSIPGELPEDAKGCYHPCRTFCGTGVNNKSA). Residues 458–478 (QVLLSLVIPGHLIFLYTIYLM) form a helical membrane-spanning segment. Residues 479 to 487 (KSGHTSLTP) are Cytoplasmic-facing. Residues 488–508 (IFVAVYLLAALLQVFALLWIA) form a helical membrane-spanning segment. Residues 509-531 (DWMVHHIWRKGKDPDSFSIPYLT) are Extracellular-facing. A helical transmembrane segment spans residues 532–552 (ALGDLLGTALLAISFHILWII). At 553–561 (GDRDGDVGD) the chain is on the cytoplasmic side.

Belongs to the SLC41A transporter family.

It is found in the cell membrane. It catalyses the reaction Mg(2+)(in) = Mg(2+)(out). It carries out the reaction Mn(2+)(in) = Mn(2+)(out). The catalysed reaction is Co(2+)(in) = Co(2+)(out). The enzyme catalyses Ni(2+)(in) = Ni(2+)(out). It catalyses the reaction Fe(2+)(in) = Fe(2+)(out). Its function is as follows. Acts as a plasma-membrane magnesium transporter. Can also mediate the transport of other divalent metal cations in an order of Ba(2+) &gt; Ni(2+) &gt; Co(2+) &gt; Fe(2+) &gt; Mn(2+). In Xenopus laevis (African clawed frog), this protein is Solute carrier family 41 member 2 (slc41a2).